A 123-amino-acid chain; its full sequence is ATP synthase epsilon chain (123 aa).

The interval 96–123 (ESRKQSAETEHDKAVAESELRAVKRMEA) is disordered.

The protein belongs to the ATPase epsilon chain family. In terms of assembly, F-type ATPases have 2 components, CF(1) - the catalytic core - and CF(0) - the membrane proton channel. CF(1) has five subunits: alpha(3), beta(3), gamma(1), delta(1), epsilon(1). CF(0) has three main subunits: a, b and c.

It is found in the cell membrane. Functionally, produces ATP from ADP in the presence of a proton gradient across the membrane. In Corynebacterium jeikeium (strain K411), this protein is ATP synthase epsilon chain.